A 665-amino-acid chain; its full sequence is MYSRKELANAIRMLSIDAVQNAQSGHPGMPMGMADIAEVLWRSFLKHNPANPNWNDRDRFILSNGHGSMLLYSLLHLTGYNLPIEELKKFRQLNSKTPGHPETGETPGVETTTGPLGQGLANAVGMAIAERTLSSYFNRPGYDIINHYTWVFVGDGCLMEGISHEVCSLAGTLNLGKLIVFYDKNGISIDGKTAHWFTDDTAKRFESYNWHVLDNIDGHDSESIERSIKQAKLITNQPSIIICNTIIGFGSPNKSGTAESHGAPLGEVEISLIREQLKWNYPPFQIPKEIYKKWNFIEEGSKLEKKWNEKFSLYQSKYPDLSTEYLRRINKKLPVEWDRVTNNYISFLQKNRQSIASRKASQNTLEKYAMILPELIGGSADLSPSNLTMWSRCNSIKDNLSGNYIHYGVREFGMTAIANGISHHGGFIPYTATFLMFVEYARNAVRMAALMCTKHIFVYTHDSIGLGEDGPTHQPVEQLSSLRITPNIDVWRPSDQVETAVAWKKAIEKTSGPTALILSRQNLDQFERSSEQLENISYGAYILYDSKKRLDIIFISTGSELNVTLIAAKKLASLGYSVRVVSMPCTSVFDRQDASYKEFVLPTYVAKRVAVEASIEDFWYKYVGINGVIIGMKTFGESAPAEDLFKKFGFTVQNIFNKSLILLKS.

H26 is a binding site for substrate. Thiamine diphosphate contacts are provided by residues H66 and 114–116; that span reads GPL. The tract at residues 94–114 is disordered; sequence NSKTPGHPETGETPGVETTTG. Over residues 97–114 the composition is skewed to low complexity; sequence TPGHPETGETPGVETTTG. Residue D155 coordinates Mg(2+). 2 residues coordinate thiamine diphosphate: G156 and N185. Residues N185 and I187 each coordinate Mg(2+). 3 residues coordinate substrate: H261, R358, and S385. H261 contributes to the thiamine diphosphate binding site. Catalysis depends on E411, which acts as the Proton donor. F437 contributes to the thiamine diphosphate binding site. The substrate site is built by H461, D469, and R520.

It belongs to the transketolase family. Homodimer. Requires Mg(2+) as cofactor. It depends on Ca(2+) as a cofactor. The cofactor is Mn(2+). Co(2+) is required as a cofactor. Thiamine diphosphate serves as cofactor.

The catalysed reaction is D-sedoheptulose 7-phosphate + D-glyceraldehyde 3-phosphate = aldehydo-D-ribose 5-phosphate + D-xylulose 5-phosphate. Functionally, catalyzes the transfer of a two-carbon ketol group from a ketose donor to an aldose acceptor, via a covalent intermediate with the cofactor thiamine pyrophosphate. This is Transketolase (tkt) from Buchnera aphidicola subsp. Acyrthosiphon pisum (strain APS) (Acyrthosiphon pisum symbiotic bacterium).